Here is a 251-residue protein sequence, read N- to C-terminus: MLLSLTHPSFLAMLPMLLMSNLLQWEGVTSASIHHIEDDYGEAYLKDLFDQAIKLSNDTMALTIEMRMIFFSDGFSSNMFRKIVLDFLKDHKHMIETLNSCHTFSLSVPETLEEARKISLEDFLKIIVSILNSWNKPLYHLETELHCMKGAPDAILIRANAIRTLNRELLETILMILSRVHPGMEENTDYPLWTDLASLQATNKERQFFALYKLFYCLRVDTFTVDHYLKYLMCMLYSDDICTSVKFYEDP.

Positions 1 to 30 (MLLSLTHPSFLAMLPMLLMSNLLQWEGVTS) are cleaved as a signal peptide. N-linked (GlcNAc...) asparagine glycosylation is present at Asn-57. 2 cysteine pairs are disulfide-bonded: Cys-101–Cys-217 and Cys-234–Cys-242.

Belongs to the somatotropin/prolactin family. In terms of tissue distribution, expressed exclusively in the placenta. Expressed in spongiotrophoblast cells and trophoblast giant cells of the junctional zone and in labyrinthine trophoblast.

It is found in the secreted. The sequence is that of Prolactin-7C1 (Prl7c1) from Mus musculus (Mouse).